Reading from the N-terminus, the 365-residue chain is Red-sensitive opsin (365 aa).

At 1–51 (MASQLNEAIFAARRRNDDDDTTRSSVFTYTNSNNTRGPFEGPNYHIAPRWV) the chain is on the extracellular side. The N-linked (GlcNAc...) asparagine glycan is linked to asparagine 33. The helical transmembrane segment at 52–76 (YNLTSIWMIFVVFASVFTNGLVIVA) threads the bilayer. Topologically, residues 77 to 88 (TLKFKKLRHPLN) are cytoplasmic. The chain crosses the membrane as a helical span at residues 89-113 (WILVNMAIADLGETVIASTISVFNQ). The Extracellular portion of the chain corresponds to 114-128 (IFGYFILGHPMCVLE). Cysteine 125 and cysteine 202 form a disulfide bridge. The helical transmembrane segment at 129–148 (GFTVSTCGITALWSLTVIAW) threads the bilayer. At 149 to 167 (ERWFVVCKPFGNIKFDEKL) the chain is on the cytoplasmic side. A helical transmembrane segment spans residues 168 to 191 (AATGIIFSWVWSAGWCAPPMFGWS). Over 192-217 (RFWPHGLKTSCGPDVFSGSSDPGVQS) the chain is Extracellular. The chain crosses the membrane as a helical span at residues 218 to 245 (YMLVLMITCCIIPLAIIILCYLHVWWTI). At 246-267 (RQVAQQQKESESTQKAEREVSR) the chain is on the cytoplasmic side. A helical transmembrane segment spans residues 268–291 (MVVVMIVAYIFCWGPYTFFACFAA). The Extracellular segment spans residues 292 to 299 (FSPGYSFH). Residues 300-324 (PLAAALPAYFAKSATIYNPIIYVFM) form a helical membrane-spanning segment. At lysine 311 the chain carries N6-(retinylidene)lysine. Over 325–365 (NRQFRNCIYQMFGKKVDDGSEVSSTSRTEVSSVSNSSVSPA) the chain is Cytoplasmic. Positions 342 to 365 (DGSEVSSTSRTEVSSVSNSSVSPA) are disordered. The span at 345-365 (EVSSTSRTEVSSVSNSSVSPA) shows a compositional bias: low complexity.

This sequence belongs to the G-protein coupled receptor 1 family. Opsin subfamily. Phosphorylated on some or all of the serine and threonine residues present in the C-terminal region.

Its subcellular location is the membrane. Functionally, visual pigments are the light-absorbing molecules that mediate vision. They consist of an apoprotein, opsin, covalently linked to cis-retinal. The polypeptide is Red-sensitive opsin (opn1lw1) (Xenopus laevis (African clawed frog)).